The chain runs to 258 residues: Imidazole glycerol phosphate synthase subunit HisF (258 aa).

Residues aspartate 11 and aspartate 130 contribute to the active site.

Belongs to the HisA/HisF family. Heterodimer of HisH and HisF.

The protein resides in the cytoplasm. The enzyme catalyses 5-[(5-phospho-1-deoxy-D-ribulos-1-ylimino)methylamino]-1-(5-phospho-beta-D-ribosyl)imidazole-4-carboxamide + L-glutamine = D-erythro-1-(imidazol-4-yl)glycerol 3-phosphate + 5-amino-1-(5-phospho-beta-D-ribosyl)imidazole-4-carboxamide + L-glutamate + H(+). The protein operates within amino-acid biosynthesis; L-histidine biosynthesis; L-histidine from 5-phospho-alpha-D-ribose 1-diphosphate: step 5/9. Functionally, IGPS catalyzes the conversion of PRFAR and glutamine to IGP, AICAR and glutamate. The HisF subunit catalyzes the cyclization activity that produces IGP and AICAR from PRFAR using the ammonia provided by the HisH subunit. In Stenotrophomonas maltophilia (strain K279a), this protein is Imidazole glycerol phosphate synthase subunit HisF.